The following is a 309-amino-acid chain: MKKITIATRGSKLAFWQANYIKDQLQKMYSYLEVDLMVIKTKGDHILDVPLAKVGGKGLFVKEIEEALLSGEADCAVHSMKDVPMELPFELCLAAITEREDPTDMFLSIKYSGVKSLPENALVGTSSLRRQAQLLALRPDLQIIPLRGNIDTRLRKLMAEEFDAIIMATAGIKRLGLIAPYMSSLPCSVMLPAVGQGALGIEVQKERQDVLELFSFLNHKETYHCIQAERDFLAGLDGGCQVPIAGYATICKQETICLEGLVAKSDGSVMIRNRLERSVSDAYDIGMTLSKILLAEGADDILASMHTIL.

Cysteine 240 is modified (S-(dipyrrolylmethanemethyl)cysteine).

The protein belongs to the HMBS family. In terms of assembly, monomer. Requires dipyrromethane as cofactor.

It catalyses the reaction 4 porphobilinogen + H2O = hydroxymethylbilane + 4 NH4(+). It participates in porphyrin-containing compound metabolism; protoporphyrin-IX biosynthesis; coproporphyrinogen-III from 5-aminolevulinate: step 2/4. In terms of biological role, tetrapolymerization of the monopyrrole PBG into the hydroxymethylbilane pre-uroporphyrinogen in several discrete steps. The protein is Porphobilinogen deaminase of Lawsonia intracellularis (strain PHE/MN1-00).